Reading from the N-terminus, the 308-residue chain is Ribosomal RNA small subunit methyltransferase H (308 aa).

S-adenosyl-L-methionine-binding positions include 33 to 35, aspartate 51, phenylalanine 82, aspartate 96, and glutamine 103; that span reads GGY.

Belongs to the methyltransferase superfamily. RsmH family.

It is found in the cytoplasm. The enzyme catalyses cytidine(1402) in 16S rRNA + S-adenosyl-L-methionine = N(4)-methylcytidine(1402) in 16S rRNA + S-adenosyl-L-homocysteine + H(+). Functionally, specifically methylates the N4 position of cytidine in position 1402 (C1402) of 16S rRNA. The polypeptide is Ribosomal RNA small subunit methyltransferase H (Rickettsia canadensis (strain McKiel)).